Here is a 363-residue protein sequence, read N- to C-terminus: MLSNISAGENSEVEKIVVKCSKSGMHNYIFITIPIIYSTIFVVGVFGNSLVVIVIYSYMKMKTMASVFLMNLALSDLCFVITLPLWAVYTAMHYHWPFGDLLCKIASTAITLNLYTTVFLLTCLSIDRYSAIVHPMKSRIRRTVMVARLTCVGIWLVAFLASLPSVIYRQIFIFPDTNQTVCALVYHSGHIYFMVGMSLVKNIVGFFIPFVIILTSYTLIGKTLKEVYRAQRARNDDIFKMIVAVVLLFFFCWIPHQVFTFLDVLIQMDVIQNCKMYDIVDTGMPITICIAYFNSCLNPFLYGFFGKKFRKHFLQLIKYIPPKMRTHASVNTKSSTVSQRLSDTKCASNKIALWIFDIEEHCK.

Residues 1–27 (MLSNISAGENSEVEKIVVKCSKSGMHN) lie on the Extracellular side of the membrane. Asn-4 carries an N-linked (GlcNAc...) asparagine glycan. 2 disulfides stabilise this stretch: Cys-20–Cys-274 and Cys-103–Cys-182. A helical membrane pass occupies residues 28-57 (YIFITIPIIYSTIFVVGVFGNSLVVIVIYS). Over 58 to 63 (YMKMKT) the chain is Cytoplasmic. Residues 64–91 (MASVFLMNLALSDLCFVITLPLWAVYTA) traverse the membrane as a helical segment. The Extracellular portion of the chain corresponds to 92–100 (MHYHWPFGD). Residues 101–127 (LLCKIASTAITLNLYTTVFLLTCLSID) traverse the membrane as a helical segment. Residues 128 to 143 (RYSAIVHPMKSRIRRT) lie on the Cytoplasmic side of the membrane. A helical transmembrane segment spans residues 144–167 (VMVARLTCVGIWLVAFLASLPSVI). At 168-192 (YRQIFIFPDTNQTVCALVYHSGHIY) the chain is on the extracellular side. Residue Arg-169 participates in angiotensin II binding. N-linked (GlcNAc...) asparagine glycosylation is present at Asn-178. Angiotensin II contacts are provided by Tyr-186 and Lys-201. A helical transmembrane segment spans residues 193 to 218 (FMVGMSLVKNIVGFFIPFVIILTSYT). At 219-239 (LIGKTLKEVYRAQRARNDDIF) the chain is on the cytoplasmic side. The helical transmembrane segment at 240–268 (KMIVAVVLLFFFCWIPHQVFTFLDVLIQM) threads the bilayer. Over 269–278 (DVIQNCKMYD) the chain is Extracellular. Residues 279-304 (IVDTGMPITICIAYFNSCLNPFLYGF) form a helical membrane-spanning segment. Residues 305-363 (FGKKFRKHFLQLIKYIPPKMRTHASVNTKSSTVSQRLSDTKCASNKIALWIFDIEEHCK) are Cytoplasmic-facing. S-palmitoyl cysteine attachment occurs at residues Cys-346 and Cys-362.

Belongs to the G-protein coupled receptor 1 family. C-terminal Ser or Thr residues may be phosphorylated. As to expression, heart membranes, follicular oocytes.

It localises to the cell membrane. Its function is as follows. Receptor for angiotensin II, a vasoconstricting peptide, which acts as a key regulator of blood pressure and sodium retention by the kidney. The activated receptor in turn couples to G-alpha proteins G(q) (GNAQ, GNA11, GNA14 or GNA15) and thus activates phospholipase C and increases the cytosolic Ca(2+) concentrations, which in turn triggers cellular responses such as stimulation of protein kinase C. The sequence is that of Type-1 angiotensin II receptor B (agtr1-b) from Xenopus laevis (African clawed frog).